A 420-amino-acid chain; its full sequence is UDP-N-acetyl-D-mannosamine dehydrogenase (420 aa).

NAD(+)-binding residues include Tyr-13, Ile-14, Asp-33, Thr-85, and Thr-126. Arg-160, Val-161, Lys-212, Asn-216, Arg-219, His-250, Arg-252, and Gly-263 together coordinate UDP-N-acetyl-alpha-D-mannosaminouronate. Lys-212 serves as the catalytic Proton donor/acceptor. Cys-266 functions as the Nucleophile in the catalytic mechanism. The UDP-N-acetyl-alpha-D-mannosaminouronate site is built by Phe-330 and Lys-331. Residue Arg-338 coordinates NAD(+). Lys-416 is a binding site for UDP-N-acetyl-alpha-D-mannosaminouronate.

This sequence belongs to the UDP-glucose/GDP-mannose dehydrogenase family. WecC subfamily. As to quaternary structure, homodimer.

It carries out the reaction UDP-N-acetyl-alpha-D-mannosamine + 2 NAD(+) + H2O = UDP-N-acetyl-alpha-D-mannosaminouronate + 2 NADH + 3 H(+). The protein operates within bacterial outer membrane biogenesis; enterobacterial common antigen biosynthesis. Its function is as follows. Catalyzes the four-electron oxidation of UDP-N-acetyl-D-mannosamine (UDP-ManNAc), reducing NAD(+) and releasing UDP-N-acetylmannosaminuronic acid (UDP-ManNAcA). This is UDP-N-acetyl-D-mannosamine dehydrogenase from Shigella flexneri.